The chain runs to 257 residues: MAPKKGVKVAAKKKTAEKVSNPLFERRPKQFGIGGALPPKKDLSRYIKWPKSIRLQRQKRILKQRLKVPPALNQFTKTLDKNLATSLFKVLLKYRPEDKAAKKERLVKKAQAEAEGKPSESKKPIVVKYGLNHVTYLIEQNKAQLVVIAHDVDPIELVVWLPALCRKMEVPYCIVKGKSRLGAVVHQKTASCLCLTTVKNEDKLEFSKILEAIKANFNDKYEEYRKKWGGGIMGSKSQAKTKAKERVIAKEAAQRMN.

Belongs to the eukaryotic ribosomal protein eL8 family.

This Arabidopsis thaliana (Mouse-ear cress) protein is Large ribosomal subunit protein eL8z (RPL7AA).